The chain runs to 82 residues: Probable tautomerase XF_1725 (82 aa).

Pro-2 functions as the Proton acceptor; via imino nitrogen in the catalytic mechanism.

The protein belongs to the 4-oxalocrotonate tautomerase family.

The chain is Probable tautomerase XF_1725 from Xylella fastidiosa (strain 9a5c).